A 552-amino-acid polypeptide reads, in one-letter code: Carboxypeptidase Y homolog A (552 aa).

An N-terminal signal peptide occupies residues 1 to 17; that stretch reads MRVLPATLLVGAATAAT. A propeptide spanning residues 18–133 is cleaved from the precursor; the sequence is PAQQVLGGLQ…KLEAYDLRIK (116 aa). 5 disulfides stabilise this stretch: Cys188/Cys428, Cys322/Cys336, Cys346/Cys369, Cys353/Cys362, and Cys391/Cys398. An N-linked (GlcNAc...) asparagine glycan is attached at Asn219. Residue Ser275 is part of the active site. The active site involves Asp467. A glycan (N-linked (GlcNAc...) asparagine) is linked at Asn518. His529 is an active-site residue.

This sequence belongs to the peptidase S10 family.

The protein resides in the vacuole. It catalyses the reaction Release of a C-terminal amino acid with broad specificity.. In terms of biological role, vacuolar carboxypeptidase involved in degradation of small peptides. Digests preferentially peptides containing an aliphatic or hydrophobic residue in P1' position, as well as methionine, leucine or phenylalanine in P1 position of ester substrate. This chain is Carboxypeptidase Y homolog A (cpyA), found in Emericella nidulans (strain FGSC A4 / ATCC 38163 / CBS 112.46 / NRRL 194 / M139) (Aspergillus nidulans).